Reading from the N-terminus, the 126-residue chain is Fatty acid-binding protein, liver (126 aa).

N-acetylalanine is present on Ala-2.

This sequence belongs to the calycin superfamily. Fatty-acid binding protein (FABP) family.

The protein resides in the cytoplasm. Binds free fatty acids and their coenzyme A derivatives, bilirubin, and some other small molecules in the cytoplasm. May be involved in intracellular lipid transport. The protein is Fatty acid-binding protein, liver (fabp1) of Schroederichthys bivius (Narrowmouthed catshark).